The sequence spans 418 residues: Actin-related protein 3B (418 aa).

It belongs to the actin family. ARP3 subfamily. In terms of assembly, interacts with the Arp2/3 complex composed of ARP2, ARP3, ARPC1B, ARPC1B/p41-ARC, ARPC2/p34-ARC, ARPC3/p21-ARC, ARPC4/p20-ARC and ARPC5/p16-ARC.

Its subcellular location is the cytoplasm. It is found in the cytoskeleton. The protein localises to the cell projection. In terms of biological role, plays a role in the organization of the actin cytoskeleton. May function as ATP-binding component of the Arp2/3 complex which is involved in regulation of actin polymerization and together with an activating nucleation-promoting factor (NPF) mediates the formation of branched actin networks. May decrease the metastatic potential of tumors. In Mus musculus (Mouse), this protein is Actin-related protein 3B (Actr3b).